A 160-amino-acid chain; its full sequence is 2-C-methyl-D-erythritol 2,4-cyclodiphosphate synthase (160 aa).

Residues aspartate 10 and histidine 12 each coordinate a divalent metal cation. 4-CDP-2-C-methyl-D-erythritol 2-phosphate is bound by residues 10–12 and 36–37; these read DVH and HS. Residue histidine 44 coordinates a divalent metal cation. 4-CDP-2-C-methyl-D-erythritol 2-phosphate is bound by residues 58 to 60, 63 to 67, 102 to 108, 134 to 137, phenylalanine 141, and arginine 144; these read DIG, FPDTD, AQAPKML, and TTTE.

It belongs to the IspF family. In terms of assembly, homotrimer. The cofactor is a divalent metal cation.

The catalysed reaction is 4-CDP-2-C-methyl-D-erythritol 2-phosphate = 2-C-methyl-D-erythritol 2,4-cyclic diphosphate + CMP. It participates in isoprenoid biosynthesis; isopentenyl diphosphate biosynthesis via DXP pathway; isopentenyl diphosphate from 1-deoxy-D-xylulose 5-phosphate: step 4/6. Involved in the biosynthesis of isopentenyl diphosphate (IPP) and dimethylallyl diphosphate (DMAPP), two major building blocks of isoprenoid compounds. Catalyzes the conversion of 4-diphosphocytidyl-2-C-methyl-D-erythritol 2-phosphate (CDP-ME2P) to 2-C-methyl-D-erythritol 2,4-cyclodiphosphate (ME-CPP) with a corresponding release of cytidine 5-monophosphate (CMP). The sequence is that of 2-C-methyl-D-erythritol 2,4-cyclodiphosphate synthase from Shewanella amazonensis (strain ATCC BAA-1098 / SB2B).